Reading from the N-terminus, the 366-residue chain is RISC-loading complex subunit TARBP2 (366 aa).

3 sufficient for interaction with PRKRA regions span residues 22–105 (MLAA…EPAL), 152–234 (SPQQ…DARD), and 287–366 (LGAL…AGSK). Residues 30 to 97 (TPISLLQEYG…AEVALKHLKG (68 aa)) enclose the DRBM 1 domain. Residues 135 to 158 (PSAVPTRSSPMEVQPPVSPQQSEC) are disordered. Ser-152 is modified (phosphoserine). DRBM domains follow at residues 159–227 (NPVG…RVHT) and 293–361 (ACCS…YLKI). Residues 228-366 (VPLDARDGNE…QYLKIMAGSK (139 aa)) form a sufficient for interaction with DICER1 region.

The protein belongs to the TARBP2 family. Self-associates. Component of the RISC loading complex (RLC), or micro-RNA (miRNA) loading complex (miRLC), which is composed of DICER1, AGO2 and TARBP2. Note that the trimeric RLC/miRLC is also referred to as RISC. Interacts with EIF2AK2/PKR and inhibits its protein kinase activity. Interacts with DHX9 and PRKRA. Interacts with DICER1, AGO2, MOV10, EIF6 and RPL7A (60S ribosome subunit); they form a large RNA-induced silencing complex (RISC). Interacts with IRF7; this interaction prevents IRF7 phosphorylation and activation.

It is found in the cytoplasm. It localises to the perinuclear region. The protein resides in the nucleus. Required for formation of the RNA induced silencing complex (RISC). Component of the RISC loading complex (RLC), also known as the micro-RNA (miRNA) loading complex (miRLC), which is composed of DICER1, AGO2 and TARBP2. Within the RLC/miRLC, DICER1 and TARBP2 are required to process precursor miRNAs (pre-miRNAs) to mature miRNAs and then load them onto AGO2. AGO2 bound to the mature miRNA constitutes the minimal RISC and may subsequently dissociate from DICER1 and TARBP2. May also play a role in the production of short interfering RNAs (siRNAs) from double-stranded RNA (dsRNA) by DICER1. Binds in vitro to the PRM1 3'-UTR. Seems to act as a repressor of translation. For some pre-miRNA substrates, may also alter the choice of cleavage site by DICER1. Negatively regulates IRF7-mediated IFN-beta signaling triggered by viral infection by inhibiting the phosphorylation of IRF7 and promoting its 'Lys'-48-linked ubiquitination and degradation. In Bos taurus (Bovine), this protein is RISC-loading complex subunit TARBP2.